Reading from the N-terminus, the 665-residue chain is Prelamin-A/C (665 aa).

M1 is modified (N-acetylmethionine). Residues 1-27 (METPSQRRPTRSGAQASSTPLSPTRIT) are disordered. A head region spans residues 1-33 (METPSQRRPTRSGAQASSTPLSPTRITRLQEKE). Residues 1-130 (METPSQRRPT…TKKEGDLLAA (130 aa)) form an interaction with MLIP region. T3 is subject to Phosphothreonine. S5 carries the post-translational modification Phosphoserine. A Phosphothreonine modification is found at T10. Phosphoserine is present on residues S12 and S18. T19 bears the Phosphothreonine mark. S22 bears the Phosphoserine mark. In terms of domain architecture, IF rod spans 31–387 (EKEDLQELND…KLLEGEEERL (357 aa)). K32 carries the N6-acetyllysine; alternate modification. Position 32 is an N6-succinyllysine; alternate (K32). A Glycyl lysine isopeptide (Lys-Gly) (interchain with G-Cter in SUMO2); alternate cross-link involves residue K32. A coil 1A region spans residues 34–70 (DLQELNDRLAVYIDRVRSLETENAGLRLRITESEEVV). Phosphoserine occurs at positions 51, 66, and 71. The linker 1 stretch occupies residues 71–80 (SREVSGIKAA). 2 positions are modified to N6-acetyllysine: K78 and K97. Residues 81 to 218 (YEAELGDARK…NIYSEELRET (138 aa)) form a coil 1B region. K97 is covalently cross-linked (Glycyl lysine isopeptide (Lys-Gly) (interchain with G-Cter in SUMO2)). S107 bears the Phosphoserine mark. 6 positions are modified to N6-acetyllysine: K108, K114, K123, K135, K144, and K155. Position 171 is an N6-acetyllysine; alternate (K171). At K171 the chain carries N6-succinyllysine; alternate. K171 is covalently cross-linked (Glycyl lysine isopeptide (Lys-Gly) (interchain with G-Cter in SUMO2); alternate). N6-acetyllysine is present on residues K180, K201, and K208. K201 is covalently cross-linked (Glycyl lysine isopeptide (Lys-Gly) (interchain with G-Cter in SUMO2); alternate). A Glycyl lysine isopeptide (Lys-Gly) (interchain with G-Cter in SUMO); alternate cross-link involves residue K201. A Glycyl lysine isopeptide (Lys-Gly) (interchain with G-Cter in SUMO2) cross-link involves residue K208. The residue at position 212 (S212) is a Phosphoserine. Residues K219 and K233 each participate in a glycyl lysine isopeptide (Lys-Gly) (interchain with G-Cter in SUMO2) cross-link. The tract at residues 219–242 (KRRHETRLVEIDNGKQREFESRLA) is linker 2. An N6-acetyllysine mark is found at K233, K260, K265, and K270. A coil 2 region spans residues 243-383 (DALQELRAQH…HAYRKLLEGE (141 aa)). K260 participates in a covalent cross-link: Glycyl lysine isopeptide (Lys-Gly) (interchain with G-Cter in SUMO2); alternate. K270 is covalently cross-linked (Glycyl lysine isopeptide (Lys-Gly) (interchain with G-Cter in SUMO2); alternate). S277, S282, S301, and S307 each carry phosphoserine. K311 participates in a covalent cross-link: Glycyl lysine isopeptide (Lys-Gly) (interchain with G-Cter in SUMO2); alternate. N6-acetyllysine occurs at positions 311, 316, and 341. Residues K366 and K378 each participate in a glycyl lysine isopeptide (Lys-Gly) (interchain with G-Cter in SUMO2) cross-link. The segment at 384 to 442 (EERLRLSPSPTSQRSRGRASSHSSQSQGGGSVTKKRKLESSESRSSFSQHARTSGRVAV) is disordered. Residues 384 to 665 (EERLRLSPSP…TQSSQNCSIM (282 aa)) form a tail region. A phosphoserine mark is found at S390, S392, S395, S398, S403, S404, S406, S407, S409, and S414. Over residues 395 to 409 (SQRSRGRASSHSSQS) the composition is skewed to low complexity. T416 is subject to Phosphothreonine. The residue at position 417 (K417) is an N6-acetyllysine. Glycyl lysine isopeptide (Lys-Gly) (interchain with G-Cter in SUMO2) cross-links involve residues K417 and K420. A Nuclear localization signal motif is present at residues 417 to 422 (KKRKLE). Phosphoserine is present on residues S423, S426, S429, and S431. The region spanning 428 to 545 (SSFSQHARTS…EEVAMRKLVR (118 aa)) is the LTD domain. Residue K450 forms a Glycyl lysine isopeptide (Lys-Gly) (interchain with G-Cter in SUMO2); alternate linkage. 2 positions are modified to N6-acetyllysine: K450 and K457. S458 and S463 each carry phosphoserine. Residues K470 and K486 each participate in a glycyl lysine isopeptide (Lys-Gly) (interchain with G-Cter in SUMO2) cross-link. K486 is modified (N6-acetyllysine). T496 is subject to Phosphothreonine. S500 carries the phosphoserine modification. Residues T505 and T510 each carry the phosphothreonine modification. S546 is subject to Phosphoserine. T548 bears the Phosphothreonine mark. A compositionally biased stretch (acidic residues) spans 552-561 (DNDDEEEDGD). Residues 552-577 (DNDDEEEDGDELLHHHRGSHCSSSGD) form a disordered region. S570 and S573 each carry phosphoserine. K599 is covalently cross-linked (Glycyl lysine isopeptide (Lys-Gly) (interchain with G-Cter in SUMO2); alternate). A Glycyl lysine isopeptide (Lys-Gly) (interchain with G-Cter in SUMO1); alternate cross-link involves residue K599. A phosphoserine mark is found at S613, S614, S617, and S620. O-linked (GlcNAc) serine glycosylation is found at S626 and S629. A phosphoserine mark is found at S629, S633, S637, and S653. Positions 648 to 662 (LLGNSSPRTQSSQNC) are cleaved as a propeptide — removed in Lamin-A/C form. Cysteine methyl ester is present on C662. Residue C662 is the site of S-farnesyl cysteine attachment. The propeptide at 663–665 (SIM) is removed in Prelamin-A/C form and in Lamin-A/C form.

This sequence belongs to the intermediate filament family. In terms of assembly, homodimer of lamin A and lamin C. Lamin dimers then assemble into dimeric head-to-tail polymers. Ultimately, two head-to-tail polymers assemble laterally into a protofilament with a uniformly shaped rod of 3.5 nm in diameter. Interacts with lamin-associated polypeptides IA, IB and TMPO-alpha, RB1 and with emerin. Interacts with SREBF1, SREBF2, SUN2 and TMEM43. Interacts with TMEM201. Proteolytically processed isoform A interacts with NARF. Interacts with SUN1. Interacts with MLIP. Interacts with DMPK; may regulate nuclear envelope stability. Interacts with SUV39H1; the interaction increases stability of SUV39H1. Interacts with SYNE2. Interacts with ITSN1 isoform 2. Interacts with IFFO1; enables the formation of an interior nucleoskeleton that is recruited to DNA double-strand breaks. As to quaternary structure, interacts with EMD. Interacts (via C-terminus) with LEMD2 (via N-terminus) (in vitro). Proteolytic cleavage of the C-terminal of 18 residues of prelamin-A/C results in the production of lamin-A/C. The prelamin-A/C maturation pathway includes farnesylation of CAAX motif by protein farnesyltransferase (FNTA and FNTB), removal of the last three amino acids (-AAX) by RCE1/FACE2 and/or ZMPSTE24, methylation of the C-terminal cysteine by ICMT and endoproteolytic removal of the last 15 C-terminal amino acids by ZMPSTE24. Proteolytic cleavage requires prior farnesylation and methylation, and absence of these blocks cleavage. In terms of processing, farnesylation of prelamin-A/C facilitates nuclear envelope targeting. Post-translationally, phosphorylation plays a key role in lamin organization, subcellular localization and nuclear envelope disintegration. Phosphorylation by CDK1 at Ser-22 and Ser-392 at the onset of mitosis drives lamin disassembly and nuclear envelope breakdown. Phosphorylation at Ser-22 and Ser-392 during interphase promotes localization to the nucleoplasm and regulates lamina assembly. Phosphorylation at Ser-22, Ser-392 and Ser-629 during interphase causes redistribution between the nucleus and the cytoplasm. Phosphorylation at Ser-22 by CDK1 regulates matrix stiffness. Phosphorylation status of Ser-22 determines its localization between double-strand break (DSB) sites and the nuclear matrix. Phosphorylated by ATR at Ser-282 in response to DNA damage, leading to lamin disassembly and nuclear envelope rupture. Phosphorylation also regulates stability in micronuclei arising from genome instability: phosphorylation at Ser-395 by ATR in response to genome instability and double-stranded DNA breaks primes LMNA for subsequent phosphorylation at Ser-392 by CDK1 and micronuclei envelope rupture. The rupture of micronuclear envelope triggers the cGAS-STING pathway thereby activating the type I interferon response and innate immunity. Acetylation by KAT8 is required for nuclear architecture. In terms of processing, sumoylation is necessary for the localization to the nuclear envelope.

It localises to the nucleus lamina. Its subcellular location is the nucleus envelope. The protein resides in the nucleus. The protein localises to the nucleoplasm. It is found in the nucleus matrix. In terms of biological role, lamins are intermediate filament proteins that assemble into a filamentous meshwork, and which constitute the major components of the nuclear lamina, a fibrous layer on the nucleoplasmic side of the inner nuclear membrane. Lamins provide a framework for the nuclear envelope, bridging the nuclear envelope and chromatin, thereby playing an important role in nuclear assembly, chromatin organization, nuclear membrane and telomere dynamics. Lamin A and C also regulate matrix stiffness by conferring nuclear mechanical properties. The structural integrity of the lamina is strictly controlled by the cell cycle, as seen by the disintegration and formation of the nuclear envelope in prophase and telophase, respectively. Lamin A and C are present in equal amounts in the lamina of mammals. Also invoved in DNA repair: recruited by DNA repair proteins XRCC4 and IFFO1 to the DNA double-strand breaks (DSBs) to prevent chromosome translocation by immobilizing broken DNA ends. Required for normal development of peripheral nervous system and skeletal muscle and for muscle satellite cell proliferation. Required for osteoblastogenesis and bone formation. Also prevents fat infiltration of muscle and bone marrow, helping to maintain the volume and strength of skeletal muscle and bone. Required for cardiac homeostasis. Its function is as follows. Prelamin-A/C can accelerate smooth muscle cell senescence. It acts to disrupt mitosis and induce DNA damage in vascular smooth muscle cells (VSMCs), leading to mitotic failure, genomic instability, and premature senescence. The sequence is that of Prelamin-A/C (Lmna) from Rattus norvegicus (Rat).